The primary structure comprises 701 residues: Elongation factor G 2 (701 aa).

The tr-type G domain occupies Glu-8–Ala-290. Residues Ala-17–Thr-24, Asp-88–His-92, and Asn-142–Asp-145 each bind GTP.

This sequence belongs to the TRAFAC class translation factor GTPase superfamily. Classic translation factor GTPase family. EF-G/EF-2 subfamily.

It is found in the cytoplasm. Functionally, catalyzes the GTP-dependent ribosomal translocation step during translation elongation. During this step, the ribosome changes from the pre-translocational (PRE) to the post-translocational (POST) state as the newly formed A-site-bound peptidyl-tRNA and P-site-bound deacylated tRNA move to the P and E sites, respectively. Catalyzes the coordinated movement of the two tRNA molecules, the mRNA and conformational changes in the ribosome. In Cupriavidus pinatubonensis (strain JMP 134 / LMG 1197) (Cupriavidus necator (strain JMP 134)), this protein is Elongation factor G 2.